Reading from the N-terminus, the 1330-residue chain is Protein PUTATIVE RECOMBINATION INITIATION DEFECT 1 (1330 aa).

Residues 1310 to 1330 (REGRVSPIQEETRQMQTERIV) form a disordered region.

In terms of assembly, interacts with SPO11-1. According to PubMed:28855712, may interact with SPO11-2; this is in contradiction with PubMed:9461215 which claims that it seems to not interact with SPO11-2. Binds to DFO, PRD3 and MTOPVIB. Facilitates an interaction between PRD3 and DFO. As to expression, expressed in flower buds.

It localises to the nucleus. In terms of biological role, involved in DNA cleavage that forms the double-strand breaks (DSB) that initiate meiotic recombination. The protein is Protein PUTATIVE RECOMBINATION INITIATION DEFECT 1 of Arabidopsis thaliana (Mouse-ear cress).